A 337-amino-acid chain; its full sequence is G-protein coupled receptor 26 (337 aa).

The Extracellular portion of the chain corresponds to 1–10 (MNSWDAGLAG). Residues 11 to 31 (LLVGTMGVSLLSNALVLLCLL) form a helical membrane-spanning segment. Residues 32 to 47 (HSADIRRQAPALFTLN) lie on the Cytoplasmic side of the membrane. Residues 48–68 (LTCGNLLCTVVNMPLTLAGVV) form a helical membrane-spanning segment. Residues 69–81 (AQRQPAGDRLCRL) are Extracellular-facing. A disulfide bridge connects residues C79 and C156. A helical membrane pass occupies residues 82 to 102 (AAFLDTFLAANSMLSMAALSI). Residues 103 to 123 (DRWVAVVFPLSYRAKMRLRDA) lie on the Cytoplasmic side of the membrane. A helical transmembrane segment spans residues 124-144 (ALMVAYTWLHALTFPAAALAL). Residues 145 to 168 (SWLGFHQLYASCTLCSRRPDERLR) lie on the Extracellular side of the membrane. Residues 169 to 189 (FAVFTGAFHALSFLLSFVVLC) form a helical membrane-spanning segment. The Cytoplasmic portion of the chain corresponds to 190–245 (CTYLKVLKVARFHCKRIDVITMQTLVLLVDLHPSVRERCLEEQKRRRQRATKKIST). Residues 246–266 (FIGTFLVCFAPYVITRLVELF) traverse the membrane as a helical segment. Residues 267–276 (STVPIGSHWG) lie on the Extracellular side of the membrane. A helical transmembrane segment spans residues 277-297 (VLSKCLAYSKAASDPFVYSLL). The Cytoplasmic segment spans residues 298-337 (RHQYRKSCKEILNRLLHRRSIHSSGLTGDSHSQNILPVSE).

This sequence belongs to the G-protein coupled receptor 1 family. As to expression, highly expressed in the CNS, the highest expression is seen in the amygdala, hippocampus and thalamus. Weak expression is detected in testis. Down-regulated in glioblastoma.

The protein resides in the cell membrane. Its function is as follows. Orphan receptor. Displays a significant level of constitutive activity. Its effect is mediated by G(s)-alpha protein that stimulate adenylate cyclase, resulting in an elevation of intracellular cAMP. This chain is G-protein coupled receptor 26 (GPR26), found in Homo sapiens (Human).